Here is a 310-residue protein sequence, read N- to C-terminus: Cytosolic Fe-S cluster assembly factor Nubp1 homolog (310 aa).

[4Fe-4S] cluster contacts are provided by C8, C22, C25, and C31. ATP is bound at residue 62–69 (GKGGVGKS). [4Fe-4S] cluster-binding residues include C239 and C242.

Belongs to the Mrp/NBP35 ATP-binding proteins family. NUBP1/NBP35 subfamily. Heterotetramer of 2 Nubp1 and 2 Nubp2 chains. It depends on [4Fe-4S] cluster as a cofactor.

It is found in the cytoplasm. Component of the cytosolic iron-sulfur (Fe/S) protein assembly (CIA) machinery. Required for maturation of extramitochondrial Fe-S proteins. The Nubp1-Nubp2 heterotetramer forms a Fe-S scaffold complex, mediating the de novo assembly of an Fe-S cluster and its transfer to target apoproteins. In Drosophila ananassae (Fruit fly), this protein is Cytosolic Fe-S cluster assembly factor Nubp1 homolog.